The following is a 903-amino-acid chain: Dual serine/threonine and tyrosine protein kinase (903 aa).

Positions 382 to 414 (ANRKQEEMKEMIVETLESMKEQLLEDAANLEFT) form a coiled coil. In terms of domain architecture, Protein kinase spans 627–881 (PKLGRELGRG…PLLGIVQPSL (255 aa)). ATP-binding positions include 633-641 (LGRGQYGVV) and K656. The Proton acceptor role is filled by D752.

The protein belongs to the protein kinase superfamily. Ser/Thr protein kinase family.

Its subcellular location is the cytoplasm. It localises to the cell membrane. The protein resides in the apical cell membrane. The protein localises to the basolateral cell membrane. It is found in the cell junction. The catalysed reaction is L-seryl-[protein] + ATP = O-phospho-L-seryl-[protein] + ADP + H(+). It catalyses the reaction L-threonyl-[protein] + ATP = O-phospho-L-threonyl-[protein] + ADP + H(+). The enzyme catalyses L-tyrosyl-[protein] + ATP = O-phospho-L-tyrosyl-[protein] + ADP + H(+). May act as a positive regulator of ERK phosphorylation downstream of fibroblast growth factor-receptor activation. May induce both caspase-dependent apoptosis and caspase-independent cell death. May play a role in the embryonic development. The chain is Dual serine/threonine and tyrosine protein kinase from Pimephales promelas (Fathead minnow).